The sequence spans 383 residues: UDP-N-acetylenolpyruvoylglucosamine reductase (383 aa).

Residues 1–13 (MRTRRDVPADRSG) show a composition bias toward basic and acidic residues. A disordered region spans residues 1–26 (MRTRRDVPADRSGRSRVSRHPGLSVP). In terms of domain architecture, FAD-binding PCMH-type spans 49-215 (LGGPATRLLT…LRVRFELENA (167 aa)). Residue R192 is part of the active site. The active-site Proton donor is the S271. E375 is a catalytic residue.

It belongs to the MurB family. FAD is required as a cofactor.

It is found in the cytoplasm. It carries out the reaction UDP-N-acetyl-alpha-D-muramate + NADP(+) = UDP-N-acetyl-3-O-(1-carboxyvinyl)-alpha-D-glucosamine + NADPH + H(+). It functions in the pathway cell wall biogenesis; peptidoglycan biosynthesis. In terms of biological role, cell wall formation. The sequence is that of UDP-N-acetylenolpyruvoylglucosamine reductase from Streptomyces coelicolor (strain ATCC BAA-471 / A3(2) / M145).